The sequence spans 190 residues: Elongation factor P-like protein (190 aa).

Belongs to the elongation factor P family.

The sequence is that of Elongation factor P-like protein from Proteus mirabilis (strain HI4320).